The sequence spans 337 residues: Protein-arginine kinase (337 aa).

The 232-residue stretch at 8-239 (VVLSSRIRLA…KQIISSERRA (232 aa)) folds into the Phosphagen kinase C-terminal domain. Residues 11–15 (SSRIR), histidine 76, arginine 110, 161–165 (RASVM), and 192–197 (RGIYGE) each bind ATP. An RDXXRA motif of the pArg binding pocket involved in allosteric regulation motif is present at residues 321-326 (RDVKRA).

Belongs to the ATP:guanido phosphotransferase family.

The catalysed reaction is L-arginyl-[protein] + ATP = N(omega)-phospho-L-arginyl-[protein] + ADP + H(+). Appears to be allosterically activated by the binding of pArg-containing polypeptides to the pArg-binding pocket localized in the C-terminal domain of McsB. Functionally, catalyzes the specific phosphorylation of arginine residues in proteins. In Caldanaerobacter subterraneus subsp. tengcongensis (strain DSM 15242 / JCM 11007 / NBRC 100824 / MB4) (Thermoanaerobacter tengcongensis), this protein is Protein-arginine kinase.